The sequence spans 393 residues: Protein TsgA (393 aa).

Residues 1–10 lie on the Cytoplasmic side of the membrane; sequence MTNSNRIKLT. A helical transmembrane segment spans residues 11–31; sequence WISFLSYALTGALVIVTGMVM. At 32–50 the chain is on the periplasmic side; that stretch reads GNIADYFHLPVSSMSNTFT. The helical transmembrane segment at 51–71 threads the bilayer; it reads FLNAGILISIFLNAWLMEIVP. Over 72 to 77 the chain is Cytoplasmic; it reads LKTQLR. The helical transmembrane segment at 78–98 threads the bilayer; sequence FGFILMVLAVAGLMFSHSLAL. The Periplasmic portion of the chain corresponds to 99-100; sequence FS. The helical transmembrane segment at 101–121 threads the bilayer; the sequence is AAMFVLGLVSGITMSIGTFLI. At 122–133 the chain is on the cytoplasmic side; the sequence is TQLYEGRQRGSR. A helical membrane pass occupies residues 134–154; the sequence is LLFTDSFFSMAGMIFPMVAAF. Over 155 to 161 the chain is Periplasmic; the sequence is LLARSIE. The chain crosses the membrane as a helical span at residues 162–182; sequence WYWVYACIGLVYLAIFILTFG. Residues 183-205 lie on the Cytoplasmic side of the membrane; the sequence is CEFPALGKHAQHSQAPVVKEKWG. Residues 206–226 traverse the membrane as a helical segment; sequence IGVLFLAVAALCYILGQLGFI. The Periplasmic segment spans residues 227–244; sequence SWVPEYAKGLGMSLNDAG. Residues 245-265 traverse the membrane as a helical segment; sequence ALVSDFWMSYMFGMWAFSFIL. Residues 266 to 272 are Cytoplasmic-facing; it reads RFFDLQR. A helical transmembrane segment spans residues 273 to 293; it reads ILTVLAGMAAVLMYLFITGTQ. The Periplasmic portion of the chain corresponds to 294–297; the sequence is AHMP. A helical membrane pass occupies residues 298-318; sequence WFILTLGFFSSAIYTSIITLG. The Cytoplasmic portion of the chain corresponds to 319 to 331; the sequence is SQQTKVASPKLVN. The chain crosses the membrane as a helical span at residues 332-352; the sequence is FILTCGTIGTMLTFVVTGPIV. The Periplasmic segment spans residues 353–360; that stretch reads AHSGPQAA. The helical transmembrane segment at 361-381 threads the bilayer; that stretch reads LLTANGLYAVVFVMCFALGFV. Over 382–393 the chain is Cytoplasmic; that stretch reads SRHRQHSSPAAH.

Belongs to the major facilitator superfamily. TsgA family.

It is found in the cell inner membrane. This Salmonella paratyphi A (strain ATCC 9150 / SARB42) protein is Protein TsgA.